A 511-amino-acid polypeptide reads, in one-letter code: NADH-ubiquinone oxidoreductase chain 4 (511 aa).

A run of 14 helical transmembrane segments spans residues 1–21 (MNQI…IIII), 39–59 (ISLL…YLFN), 78–98 (IDGI…ISLI), 116–136 (VLLI…LDLI), 137–157 (TFYI…GKLG), 186–206 (YIFI…GIYI), 220–240 (IILS…GILV), 264–284 (IILA…LILI), 289–309 (VIII…FYIG), 318–338 (IKVI…MSIF), 349–369 (LLIS…VGGI), 388–408 (YMPI…GIPL), 422–442 (IFIY…ITTI), and 476–496 (LLLN…NLII).

It belongs to the complex I subunit 4 family.

The protein localises to the mitochondrion membrane. It carries out the reaction a ubiquinone + NADH + 5 H(+)(in) = a ubiquinol + NAD(+) + 4 H(+)(out). In terms of biological role, core subunit of the mitochondrial membrane respiratory chain NADH dehydrogenase (Complex I) that is believed to belong to the minimal assembly required for catalysis. Complex I functions in the transfer of electrons from NADH to the respiratory chain. The immediate electron acceptor for the enzyme is believed to be ubiquinone. The sequence is that of NADH-ubiquinone oxidoreductase chain 4 (ND4) from Wickerhamomyces canadensis (Yeast).